A 227-amino-acid polypeptide reads, in one-letter code: Protein SSO0193 (227 aa).

The 195-residue stretch at 15 to 209 (EIGRLLIEIA…ETKPNGSDII (195 aa)) folds into the AMMECR1 domain.

This Saccharolobus solfataricus (strain ATCC 35092 / DSM 1617 / JCM 11322 / P2) (Sulfolobus solfataricus) protein is Protein SSO0193.